The sequence spans 170 residues: Adenine phosphoribosyltransferase (170 aa).

Belongs to the purine/pyrimidine phosphoribosyltransferase family. Homodimer.

The protein resides in the cytoplasm. The enzyme catalyses AMP + diphosphate = 5-phospho-alpha-D-ribose 1-diphosphate + adenine. It participates in purine metabolism; AMP biosynthesis via salvage pathway; AMP from adenine: step 1/1. Its function is as follows. Catalyzes a salvage reaction resulting in the formation of AMP, that is energically less costly than de novo synthesis. The chain is Adenine phosphoribosyltransferase from Oceanobacillus iheyensis (strain DSM 14371 / CIP 107618 / JCM 11309 / KCTC 3954 / HTE831).